A 702-amino-acid polypeptide reads, in one-letter code: Elongation factor G (702 aa).

The tr-type G domain occupies 8 to 290; that stretch reads HRVRNIGIAA…AVAMYLPAPT (283 aa). GTP is bound by residues 17 to 24, 87 to 91, and 141 to 144; these read AHIDAGKT, DTPGH, and NKMD.

This sequence belongs to the TRAFAC class translation factor GTPase superfamily. Classic translation factor GTPase family. EF-G/EF-2 subfamily.

Its subcellular location is the cytoplasm. In terms of biological role, catalyzes the GTP-dependent ribosomal translocation step during translation elongation. During this step, the ribosome changes from the pre-translocational (PRE) to the post-translocational (POST) state as the newly formed A-site-bound peptidyl-tRNA and P-site-bound deacylated tRNA move to the P and E sites, respectively. Catalyzes the coordinated movement of the two tRNA molecules, the mRNA and conformational changes in the ribosome. This Aliarcobacter butzleri (strain RM4018) (Arcobacter butzleri) protein is Elongation factor G.